The primary structure comprises 460 residues: Probable lipid II flippase MurJ (460 aa).

The next 11 membrane-spanning stretches (helical) occupy residues 4–24, 50–70, 95–115, 122–142, 155–175, 228–248, 257–277, 292–312, 336–356, 366–386, and 428–448; these read ILGA…PNLF, FASL…LLVA, IVAI…LGAL, FFAS…ALLI, LSYG…YPLV, IASF…VSYL, LPLA…IAIA, KAWF…IMLS, VFSL…FSLW, AAKI…SLMP, and LVIL…KSWV.

It belongs to the MurJ/MviN family.

It is found in the cell inner membrane. It participates in cell wall biogenesis; peptidoglycan biosynthesis. In terms of biological role, involved in peptidoglycan biosynthesis. Transports lipid-linked peptidoglycan precursors from the inner to the outer leaflet of the cytoplasmic membrane. The chain is Probable lipid II flippase MurJ from Helicobacter pylori (strain J99 / ATCC 700824) (Campylobacter pylori J99).